We begin with the raw amino-acid sequence, 370 residues long: Luciferin sulfotransferase (370 aa).

90–95 (KAGTTW) serves as a coordination point for 3'-phosphoadenylyl sulfate. His-165 functions as the Proton acceptor in the catalytic mechanism. 3'-phosphoadenylyl sulfate-binding positions include Arg-189, Ser-197, Tyr-250, 284-289 (LSFESM), and 316-320 (FMRSG).

The protein belongs to the sulfotransferase 1 family.

It carries out the reaction firefly D-luciferin + 3'-phosphoadenylyl sulfate = firefly D-sulfoluciferin + adenosine 3',5'-bisphosphate + H(+). It catalyses the reaction firefly L-luciferin + 3'-phosphoadenylyl sulfate = firefly L-sulfoluciferin + adenosine 3',5'-bisphosphate + H(+). Sulfoluciferin formation is inhibited by the product adenosine 3',5'-bisphosphate. Its function is as follows. Catalyzes the production of firefly sulfoluciferin from luciferin using the sulfo-donor 3'-phosphoadenylyl sulfate (PAPS). Is also able to catalyze the reverse reaction, i.e. the adenosine 3',5'-bisphosphate-dependent desulfonation of sulfoluciferin. Can use either D- or L-luciferin stereoisomer as substrate. Sulfoluciferin, which is not a substrate of P.pyralis luciferase, likely serves as a luciferin storage form in fireflies. This is Luciferin sulfotransferase from Photinus pyralis (Common eastern firefly).